The following is a 279-amino-acid chain: Large ribosomal subunit protein uL2 (279 aa).

Residues 222-279 (GMAMNPVDHPMGGGEGKSKSGGGRRHPKSPWGQLAKGLKTRNKKKASQKLIVRGRNAK) are disordered. The segment covering 232 to 242 (MGGGEGKSKSG) has biased composition (gly residues). The segment covering 259–268 (LKTRNKKKAS) has biased composition (basic residues).

This sequence belongs to the universal ribosomal protein uL2 family. Part of the 50S ribosomal subunit. Forms a bridge to the 30S subunit in the 70S ribosome.

In terms of biological role, one of the primary rRNA binding proteins. Required for association of the 30S and 50S subunits to form the 70S ribosome, for tRNA binding and peptide bond formation. It has been suggested to have peptidyltransferase activity; this is somewhat controversial. Makes several contacts with the 16S rRNA in the 70S ribosome. The protein is Large ribosomal subunit protein uL2 of Chlorobium phaeobacteroides (strain DSM 266 / SMG 266 / 2430).